A 205-amino-acid polypeptide reads, in one-letter code: Shieldin complex subunit 1 (205 aa).

In terms of assembly, component of the shieldin complex, consisting of SHLD1, SHLD2, SHLD3 and MAD2L2/REV7. Within the complex, SHLD2 forms a scaffold which interacts with a SHLD3-MAD2L2 subcomplex via its N-terminus, and with SHLD1 via its C-terminus. Interacts with ASTE1.

It is found in the chromosome. In terms of biological role, component of the shieldin complex, which plays an important role in repair of DNA double-stranded breaks (DSBs). During G1 and S phase of the cell cycle, the complex functions downstream of TP53BP1 to promote non-homologous end joining (NHEJ) and suppress DNA end resection. Mediates various NHEJ-dependent processes including immunoglobulin class-switch recombination, and fusion of unprotected telomeres. The polypeptide is Shieldin complex subunit 1 (Homo sapiens (Human)).